The sequence spans 977 residues: Vacuolar membrane protease (977 aa).

Topologically, residues 1 to 17 are cytoplasmic; sequence MARSRTAGRCNPFAFYR. A helical transmembrane segment spans residues 18–38; the sequence is VPVTVFVTLIYVALLAPIIVV. Residues 39 to 383 lie on the Vacuolar side of the membrane; sequence HHILPAVPES…AFAVFEIHTL (345 aa). Asn113 and Asn116 each carry an N-linked (GlcNAc...) asparagine glycan. Zn(2+) is bound by residues His166 and Asp178. Residue Glu212 is the Proton acceptor of the active site. 3 residues coordinate Zn(2+): Glu213, Glu238, and His311. The chain crosses the membrane as a helical span at residues 384–404; that stretch reads FALSVTLLIVGPLTLFITSII. The Cytoplasmic segment spans residues 405 to 438; the sequence is LANQDRMYLFGISVPVDDGFGSVPLRGWRGFFRF. Residues 439-459 traverse the membrane as a helical segment; it reads PFIFGSTTASVVALAYLMAKI. Over 460–469 the chain is Vacuolar; that stretch reads NPMIAHSSEY. A helical transmembrane segment spans residues 470–490; sequence AVWSMMISAWVFVAWFLSRIA. Over 491–500 the chain is Cytoplasmic; sequence NFARPSALHR. Residues 501–521 form a helical membrane-spanning segment; the sequence is IYVLTWMFLLTWVLLVITTVY. Residues 522–525 lie on the Vacuolar side of the membrane; sequence ENRD. Residues 526–546 traverse the membrane as a helical segment; sequence GIASGYFVIFYAFGTFMATWI. The Cytoplasmic portion of the chain corresponds to 547 to 659; the sequence is SYLELFSLPK…WSANLPKWTW (113 aa). Residues 566–576 show a composition bias toward polar residues; it reads GQISSRPTSLG. The segment at 566-604 is disordered; it reads GQISSRPTSLGGSRLLTPSGESVGQHPEDEEPTESTSLL. Residues 660–680 form a helical membrane-spanning segment; sequence ILQFLLIAPIVIILIGQLGLL. Residues 681-696 lie on the Vacuolar side of the membrane; that stretch reads ITSAIHQTMQDGSSTL. Residues 697–717 form a helical membrane-spanning segment; it reads VPYLIIALLTTFLFMPTLPFI. The Cytoplasmic segment spans residues 718 to 726; sequence HRYTYHIPT. Residues 727-747 traverse the membrane as a helical segment; sequence FLFLIFVATLVYNLVAFPFSG. The Vacuolar portion of the chain corresponds to 748–977; sequence NNRTKLFFLQ…LVKGSRSFEV (230 aa). Asn749 and Asn791 each carry an N-linked (GlcNAc...) asparagine glycan.

Belongs to the peptidase M28 family. It depends on Zn(2+) as a cofactor.

The protein resides in the vacuole membrane. In terms of biological role, may be involved in vacuolar sorting and osmoregulation. The protein is Vacuolar membrane protease of Talaromyces marneffei (strain ATCC 18224 / CBS 334.59 / QM 7333) (Penicillium marneffei).